A 232-amino-acid chain; its full sequence is Clarin-1 (232 aa).

A helical transmembrane segment spans residues 8–28 (IIFCMAGVFSFACALGVVTAL). Asn-48 is a glycosylation site (N-linked (GlcNAc...) asparagine). The next 2 helical transmembrane spans lie at 101–121 (IILF…FFMY) and 135–155 (LGLY…MILF). An N-linked (GlcNAc...) asparagine glycan is attached at Asn-184. A helical transmembrane segment spans residues 186-206 (TTSFWVVFICFFVHFLNGLLI).

It belongs to the clarin family.

It is found in the cell membrane. Functionally, may have a role in the excitatory ribbon synapse junctions between hair cells and cochlear ganglion cells and presumably also in analogous synapses within the retina. The protein is Clarin-1 (Clrn1) of Rattus norvegicus (Rat).